Consider the following 117-residue polypeptide: UPF0342 protein GWCH70_0629 (117 aa).

It belongs to the UPF0342 family.

The protein is UPF0342 protein GWCH70_0629 of Geobacillus sp. (strain WCH70).